A 436-amino-acid polypeptide reads, in one-letter code: DNA primase DnaG (436 aa).

The 75-residue stretch at 169–243 folds into the Toprim domain; it reads DSIIVVEGRA…DIDYVARAPY (75 aa). Residues Glu-175, Asp-217, and Asp-219 each coordinate Mg(2+).

Belongs to the archaeal DnaG primase family. As to quaternary structure, forms a ternary complex with MCM helicase and DNA. It depends on Mg(2+) as a cofactor.

It catalyses the reaction ssDNA + n NTP = ssDNA/pppN(pN)n-1 hybrid + (n-1) diphosphate.. In terms of biological role, RNA polymerase that catalyzes the synthesis of short RNA molecules used as primers for DNA polymerase during DNA replication. This is DNA primase DnaG from Methanococcus maripaludis (strain DSM 14266 / JCM 13030 / NBRC 101832 / S2 / LL).